A 193-amino-acid chain; its full sequence is Acyl carrier protein phosphodiesterase (193 aa).

The protein belongs to the AcpH family.

The catalysed reaction is holo-[ACP] + H2O = apo-[ACP] + (R)-4'-phosphopantetheine + H(+). Converts holo-ACP to apo-ACP by hydrolytic cleavage of the phosphopantetheine prosthetic group from ACP. This chain is Acyl carrier protein phosphodiesterase, found in Salmonella dublin (strain CT_02021853).